Reading from the N-terminus, the 1396-residue chain is DNA-directed RNA polymerase subunit beta' (1396 aa).

4 residues coordinate Zn(2+): Cys-73, Cys-75, Cys-88, and Cys-91. Positions 467, 469, and 471 each coordinate Mg(2+). Residues Cys-817, Cys-891, Cys-898, and Cys-901 each contribute to the Zn(2+) site.

This sequence belongs to the RNA polymerase beta' chain family. In terms of assembly, the RNAP catalytic core consists of 2 alpha, 1 beta, 1 beta' and 1 omega subunit. When a sigma factor is associated with the core the holoenzyme is formed, which can initiate transcription. Requires Mg(2+) as cofactor. Zn(2+) is required as a cofactor.

The catalysed reaction is RNA(n) + a ribonucleoside 5'-triphosphate = RNA(n+1) + diphosphate. Its function is as follows. DNA-dependent RNA polymerase catalyzes the transcription of DNA into RNA using the four ribonucleoside triphosphates as substrates. In Orientia tsutsugamushi (strain Ikeda) (Rickettsia tsutsugamushi), this protein is DNA-directed RNA polymerase subunit beta'.